A 229-amino-acid polypeptide reads, in one-letter code: Urease accessory protein UreF (229 aa).

This sequence belongs to the UreF family. As to quaternary structure, ureD, UreF and UreG form a complex that acts as a GTP-hydrolysis-dependent molecular chaperone, activating the urease apoprotein by helping to assemble the nickel containing metallocenter of UreC. The UreE protein probably delivers the nickel.

The protein localises to the cytoplasm. Required for maturation of urease via the functional incorporation of the urease nickel metallocenter. This Methylobacterium radiotolerans (strain ATCC 27329 / DSM 1819 / JCM 2831 / NBRC 15690 / NCIMB 10815 / 0-1) protein is Urease accessory protein UreF.